Consider the following 321-residue polypeptide: Glucokinase (321 aa).

An ATP-binding site is contributed by 8 to 13; that stretch reads GDVGGT.

It belongs to the bacterial glucokinase family.

It is found in the cytoplasm. It catalyses the reaction D-glucose + ATP = D-glucose 6-phosphate + ADP + H(+). The polypeptide is Glucokinase (Shigella flexneri serotype 5b (strain 8401)).